A 248-amino-acid polypeptide reads, in one-letter code: Calpain small subunit 2 (248 aa).

Ca(2+) is bound by residues Ala-89, Asp-92, Glu-94, Asp-117, Asp-132, Asp-134, Thr-136, Lys-138, Glu-143, Asp-162, Asp-164, Ser-166, and Asp-205. 4 consecutive EF-hand domains span residues 119–152 (FSLDTCRSIVSVMDSDTTGKLGFEEFKYLWNNIK), 149–184 (NNIKKWQCVYKQYDRDHSGSLGSSQLRGALQAAGFQ), 185–213 (LNEQLYQMIVRRYANEDGDMDFNNFISCL), and 214–248 (VRLDAMFRAFKSLDRDRDGLIQVSIKEWLQLTMYS).

Heterodimer of a large (catalytic) and a small (regulatory) subunit.

The protein resides in the cytoplasm. It is found in the cell membrane. Calcium-regulated non-lysosomal thiol-protease which catalyzes limited proteolysis of substrates involved in cytoskeletal remodeling and signal transduction. This small subunit may act as a tissue-specific chaperone of the large subunit, possibly by helping it fold into its correct conformation for activity. This chain is Calpain small subunit 2 (CAPNS2), found in Homo sapiens (Human).